The sequence spans 299 residues: tRNA dimethylallyltransferase 2 (299 aa).

9–16 (GPTGVGKT) is an ATP binding site. 11-16 (TGVGKT) contributes to the substrate binding site. Residues 34 to 37 (DSRQ) form an interaction with substrate tRNA region.

This sequence belongs to the IPP transferase family. As to quaternary structure, monomer. The cofactor is Mg(2+).

It carries out the reaction adenosine(37) in tRNA + dimethylallyl diphosphate = N(6)-dimethylallyladenosine(37) in tRNA + diphosphate. In terms of biological role, catalyzes the transfer of a dimethylallyl group onto the adenine at position 37 in tRNAs that read codons beginning with uridine, leading to the formation of N6-(dimethylallyl)adenosine (i(6)A). The sequence is that of tRNA dimethylallyltransferase 2 from Parabacteroides distasonis (strain ATCC 8503 / DSM 20701 / CIP 104284 / JCM 5825 / NCTC 11152).